The following is a 531-amino-acid chain: Peptide chain release factor 3 (531 aa).

In terms of domain architecture, tr-type G spans 10–278 (RRRRTFAIIS…SLIEWAPAPK (269 aa)). GTP-binding positions include 19-26 (SHPDAGKT), 87-91 (DTPGH), and 141-144 (NKYD).

This sequence belongs to the TRAFAC class translation factor GTPase superfamily. Classic translation factor GTPase family. PrfC subfamily.

It localises to the cytoplasm. Its function is as follows. Increases the formation of ribosomal termination complexes and stimulates activities of RF-1 and RF-2. It binds guanine nucleotides and has strong preference for UGA stop codons. It may interact directly with the ribosome. The stimulation of RF-1 and RF-2 is significantly reduced by GTP and GDP, but not by GMP. The chain is Peptide chain release factor 3 from Neisseria meningitidis serogroup A / serotype 4A (strain DSM 15465 / Z2491).